We begin with the raw amino-acid sequence, 427 residues long: MSNVVIMGAQWGDEGKGKIVDLLSREIDVIVRFQGGNNAGHTVIVGDKSYILHLIPSGILHEGKTCLIGNGVVLDPVVFWKEVEALAERGIDVGPQRLMISRKAHVIMPYHKALDVAREDFKNKESRIGTTGRGIGPCYEDKMSRIGVRAGDLADPALLRSKIEAALVEKNALFTALYGREAMSVDAVFDEVMAVGGRLVPYLTDVSSVIEDAWANDSGVMFEGAQGTHLDIDHGTYPFVTSSNTVAGNAAAGSGIPASRLDRVVAIVKAYTTRVGAGPFPTELDDEAGNHMQSVGHEFGATTGRKRRCGWLDCALLRESVRLNGPTDIALTKLDVMSGLKELKICVAYEYNGQRLQHPPQEQNGLAHVTPVYETMPGWDDDITAAKTWEDLPEAARNYICRIEELLGVPVSMISVGPERDQTLNRK.

GTP contacts are provided by residues 12 to 18 (GDEGKGK) and 40 to 42 (GHT). Aspartate 13 acts as the Proton acceptor in catalysis. Mg(2+) is bound by residues aspartate 13 and glycine 40. Residues 13 to 16 (DEGK), 38 to 41 (NAGH), threonine 131, arginine 145, glutamine 226, threonine 241, and arginine 305 each bind IMP. Histidine 41 serves as the catalytic Proton donor. 301 to 307 (ATTGRKR) serves as a coordination point for substrate. Residues arginine 307, 333–335 (KLD), and 415–417 (SVG) each bind GTP.

Belongs to the adenylosuccinate synthetase family. In terms of assembly, homodimer. Mg(2+) serves as cofactor.

It is found in the cytoplasm. It catalyses the reaction IMP + L-aspartate + GTP = N(6)-(1,2-dicarboxyethyl)-AMP + GDP + phosphate + 2 H(+). The protein operates within purine metabolism; AMP biosynthesis via de novo pathway; AMP from IMP: step 1/2. Its function is as follows. Plays an important role in the de novo pathway of purine nucleotide biosynthesis. Catalyzes the first committed step in the biosynthesis of AMP from IMP. This chain is Adenylosuccinate synthetase, found in Oleidesulfovibrio alaskensis (strain ATCC BAA-1058 / DSM 17464 / G20) (Desulfovibrio alaskensis).